Here is a 342-residue protein sequence, read N- to C-terminus: (Lyso)-N-acylphosphatidylethanolamine lipase (342 aa).

The AB hydrolase-1 domain maps to 70-201; it reads PLVMVHGFGG…KAVASVLGRS (132 aa).

Belongs to the peptidase S33 family. ABHD4/ABHD5 subfamily.

The catalysed reaction is N-hexadecanoyl-1,2-di-(9Z-octadecenoyl)-sn-glycero-3-phosphoethanolamine + H2O = N-hexadecanoyl-1-(9Z-octadecenoyl)-sn-glycero-3-phosphoethanolamine + (9Z)-octadecenoate + H(+). It catalyses the reaction an N-acyl-1,2-diacyl-sn-glycero-3-phosphoethanolamine + H2O = N,1-diacyl-sn-glycero-3-phosphoethanolamine + a fatty acid + H(+). It carries out the reaction N-hexadecanoyl-1-(9Z-octadecenoyl)-sn-glycero-3-phosphoethanolamine + H2O = N-hexadecanoyl-sn-glycero-3-phosphoethanolamine + (9Z)-octadecenoate + H(+). The enzyme catalyses N-octadecanoyl-1-(9Z-octadecenoyl)-sn-glycero-3-phosphoethanolamine + H2O = N-octadecanoyl-sn-glycero-3-phospho-ethanolamine + (9Z)-octadecenoate + H(+). The catalysed reaction is N-eicosanoyl-1-(9Z-octadecenoyl)-sn-glycero-3-phosphoethanolamine + H2O = N-eicosanoyl-sn-glycero-3-phosphoethanolamine + (9Z)-octadecenoate + H(+). It catalyses the reaction N,1-di-(9Z-octadecenoyl)-sn-glycero-3-phosphoethanolamine + H2O = N-(9Z-octadecenoyl)-sn-glycero-3-phosphoethanolamine + (9Z)-octadecenoate + H(+). It carries out the reaction N-(5Z,8Z,11Z,14Z-eicosatetraenoyl)-1-(9Z-octadecenoyl)-sn-glycero-3-phosphoethanolamine + H2O = N-(5Z,8Z,11Z,14Z-eicosatetraenoyl)-sn-glycero-3-phosphoethanolamine + (9Z)-octadecenoate + H(+). The enzyme catalyses 1-octadecanoyl-2-(9Z-octadecenoyl)-sn-glycero-3-phospho-(N-hexadecanoyl)-serine + H2O = 1-octadecanoyl-2-hydroxy-sn-glycero-3-phospho-(N-hexadecanoyl)-serine + (9Z)-octadecenoate + H(+). The catalysed reaction is 1-O-(1Z-octadecenoyl)-2-(9Z-octadecenoyl)-sn-glycero-3-phospho-N-hexadecanoyl-ethanolamine + H2O = 1-O-(1Z-octadecenyl)-sn-glycero-3-phospho-N-hexadecanoyl-ethanolamine + (9Z)-octadecenoate + H(+). It catalyses the reaction N,1-diacyl-sn-glycero-3-phosphoethanolamine + H2O = N-acyl-sn-glycero-3-phosphoethanolamine + a fatty acid + H(+). Lysophospholipase selective for N-acyl phosphatidylethanolamine (NAPE). Contributes to the biosynthesis of N-acyl ethanolamines, including the endocannabinoid anandamide by hydrolyzing the sn-1 and sn-2 acyl chains from N-acyl phosphatidylethanolamine (NAPE) generating glycerophospho-N-acyl ethanolamine (GP-NAE), an intermediate for N-acyl ethanolamine biosynthesis. Hydrolyzes substrates bearing saturated, monounsaturated, polyunsaturated N-acyl chains. Shows no significant activity towards other lysophospholipids, including lysophosphatidylcholine, lysophosphatidylethanolamine and lysophosphatidylserine. This is (Lyso)-N-acylphosphatidylethanolamine lipase from Homo sapiens (Human).